A 925-amino-acid chain; its full sequence is Protein translocase subunit SecA (925 aa).

Residues Gln87, 105–109 (GEGKT), and Asp512 contribute to the ATP site. Cys910, Cys912, Cys921, and His922 together coordinate Zn(2+).

Belongs to the SecA family. As to quaternary structure, monomer and homodimer. Part of the essential Sec protein translocation apparatus which comprises SecA, SecYEG and auxiliary proteins SecDF-YajC and YidC. It depends on Zn(2+) as a cofactor.

It localises to the cell inner membrane. Its subcellular location is the cytoplasm. The catalysed reaction is ATP + H2O + cellular proteinSide 1 = ADP + phosphate + cellular proteinSide 2.. Functionally, part of the Sec protein translocase complex. Interacts with the SecYEG preprotein conducting channel. Has a central role in coupling the hydrolysis of ATP to the transfer of proteins into and across the cell membrane, serving both as a receptor for the preprotein-SecB complex and as an ATP-driven molecular motor driving the stepwise translocation of polypeptide chains across the membrane. The sequence is that of Protein translocase subunit SecA from Psychrobacter sp. (strain PRwf-1).